The primary structure comprises 147 residues: NADH-quinone oxidoreductase subunit A (147 aa).

The next 3 membrane-spanning stretches (helical) occupy residues 13–33 (LFSY…LGAV), 70–90 (YLVA…FSWA), and 104–124 (VVVF…WGAL).

It belongs to the complex I subunit 3 family. As to quaternary structure, NDH-1 is composed of 14 different subunits. Subunits NuoA, H, J, K, L, M, N constitute the membrane sector of the complex.

The protein resides in the cell inner membrane. The enzyme catalyses a quinone + NADH + 5 H(+)(in) = a quinol + NAD(+) + 4 H(+)(out). Functionally, NDH-1 shuttles electrons from NADH, via FMN and iron-sulfur (Fe-S) centers, to quinones in the respiratory chain. The immediate electron acceptor for the enzyme in this species is believed to be ubiquinone. Couples the redox reaction to proton translocation (for every two electrons transferred, four hydrogen ions are translocated across the cytoplasmic membrane), and thus conserves the redox energy in a proton gradient. This Gluconacetobacter diazotrophicus (strain ATCC 49037 / DSM 5601 / CCUG 37298 / CIP 103539 / LMG 7603 / PAl5) protein is NADH-quinone oxidoreductase subunit A.